Here is a 51-residue protein sequence, read N- to C-terminus: Large ribosomal subunit protein bL33 (51 aa).

This sequence belongs to the bacterial ribosomal protein bL33 family.

The chain is Large ribosomal subunit protein bL33 from Pseudoalteromonas atlantica (strain T6c / ATCC BAA-1087).